Consider the following 386-residue polypeptide: MSTDTSGVGVREIDAGALPTRYARGWHCLGVAKDYLEGKPHGVEAFGTKLVVFADSHGDLKVLDGYCRHMGGDLSEGTVKGDEVACPFHDWRWGGDGRCKLVPYARRTPRMARTRSWTTDVRSGLLFVWHDHEGNPPDPAVRIPEIPEAASDEWTDWRWNRILIEGSNCRDIIDNVTDMAHFFYIHFGLPTYFKNVFEGHIASQYLHNVGRPDVDDLGTSYGEAHLDSEASYFGPSFMINWLHNRYGNYKSESILINCHYPVTQNSFVLQWGVIVEKPKGMSEEMTDKLSRVFTEGVSKGFLQDVEIWKHKTRIDNPLLVEEDGAVYQLRRWYEQFYVDVADIKPEMVERFEIEVDTKRANEFWNAEVEKNLKSREVSDDVPAEQH.

The 103-residue stretch at 26-128 folds into the Rieske domain; it reads WHCLGVAKDY…TDVRSGLLFV (103 aa). [2Fe-2S] cluster-binding residues include cysteine 67, histidine 69, cysteine 86, and histidine 89. Residues asparagine 175, histidine 181, histidine 186, and aspartate 304 each contribute to the Fe cation site.

Homotrimer. The two-component system 3-ketosteroid-9-alpha-monooxygenase is composed of an oxygenase component KshA and a reductase component KshB. [2Fe-2S] cluster is required as a cofactor. Fe cation serves as cofactor.

It carries out the reaction androsta-1,4-diene-3,17-dione + 2 reduced [2Fe-2S]-[ferredoxin] + O2 + 2 H(+) = 9alpha-hydroxyandrosta-1,4-diene-3,17-dione + 2 oxidized [2Fe-2S]-[ferredoxin] + H2O. The catalysed reaction is androst-4-ene-3,17-dione + NADH + O2 + H(+) = 9alpha-hydroxy-androst-4-ene-3,17-dione + NAD(+) + H2O. The enzyme catalyses 3-oxochol-4-en-22-oate + NADH + O2 + H(+) = 9alpha-hydroxy-3-oxochol-4-en-22-oate + NAD(+) + H2O. It catalyses the reaction 3-oxochola-1,4-dien-22-oate + NADH + O2 + H(+) = 9alpha-hydroxy-3-oxochola-1,4-dien-22-oate + NAD(+) + H2O. It carries out the reaction 3-oxochol-4-en-22-oyl-CoA + NADH + O2 + H(+) = 9alpha-hydroxy-3-oxochol-4-en-22-oyl-CoA + NAD(+) + H2O. The catalysed reaction is 3-oxochola-1,4-dien-22-oyl-CoA + NADH + O2 + H(+) = 9alpha-hydroxy-3-oxochola-1,4-dien-22-oyl-CoA + NAD(+) + H2O. It functions in the pathway lipid metabolism; steroid biosynthesis. In terms of biological role, involved in the degradation of cholesterol. Catalyzes the introduction of a 9a-hydroxyl moiety into 1,4-androstadiene-3,17-dione (ADD) to yield the 9alpha-hydroxy-1,4-androstadiene-3,17-dione (9OHADD) intermediate which spontaneously form 3-hydroxy-9,10-seconandrost-1,3,5(10)-triene-9,17-dione (HSA) via the meta-cleavage of ring B with concomitant aromatization of ring A. KSH is also able to use 4-androstene-3,17-dione (AD), 3-oxo-23,24-bisnorcholesta-4-en-22-oate (4-BNC), 3-oxo-23,24-bisnorcholesta-1,4-dien-22-oate (1,4-BNC), 3-oxo-23,24-bisnorcholesta-4-en-22-oyl-coenzyme A thioester (4-BNC-CoA) and 3-oxo-23,24-bisnorcholesta-1,4-dien-22-oyl-coenzyme A thioester (1,4-BNC-CoA) as substrates. The polypeptide is 3-ketosteroid-9-alpha-monooxygenase, oxygenase component (kshA) (Mycobacterium tuberculosis (strain ATCC 25618 / H37Rv)).